Reading from the N-terminus, the 477-residue chain is UTP--glucose-1-phosphate uridylyltransferase (477 aa).

Alanine 2 is modified (N-acetylalanine). UTP-binding positions include 92-95 (LNGG), lysine 106, glutamine 169, and glycine 198. Residue 94–95 (GG) coordinates substrate. Substrate is bound by residues histidine 199 and 227 to 229 (NSD). Residues aspartate 229 and lysine 367 each contribute to the UTP site.

This sequence belongs to the UDPGP type 1 family. In terms of assembly, monomer. It depends on Mg(2+) as a cofactor.

It localises to the cytoplasm. The enzyme catalyses alpha-D-glucose 1-phosphate + UTP + H(+) = UDP-alpha-D-glucose + diphosphate. Inhibition by uncomplexed, free UTP. Plays a central role as a glucosyl donor in cellular metabolic pathways. The protein is UTP--glucose-1-phosphate uridylyltransferase of Solanum tuberosum (Potato).